Consider the following 344-residue polypeptide: uncharacterized protein (344 aa).

This sequence belongs to the glycosyltransferase 28 family.

This is an uncharacterized protein from Methanopyrus kandleri (strain AV19 / DSM 6324 / JCM 9639 / NBRC 100938).